Consider the following 344-residue polypeptide: SUMO-activating enzyme subunit 1 (344 aa).

Belongs to the ubiquitin-activating E1 family. Heterodimer of sae1 and uba2/sae2. The heterodimer corresponds to the two domains that are encoded on a single polypeptide chain in ubiquitin-activating enzyme E1. Interacts with ube2i.

The protein localises to the nucleus. It participates in protein modification; protein sumoylation. In terms of biological role, the heterodimer acts as an E1 ligase for sumo1, sumo2, and sumo3. It mediates ATP-dependent activation of sumo proteins followed by formation of a thioester bond between a sumo protein and a conserved active site cysteine residue on uba2/sae2. In Xenopus laevis (African clawed frog), this protein is SUMO-activating enzyme subunit 1 (sae1).